The sequence spans 352 residues: Staphylococcal superantigen-like 3 (352 aa).

The signal sequence occupies residues 1–30; the sequence is MKMRTIAKTSLALGLLTTGAITVTTQSVKA. The segment at 61–165 is disordered; the sequence is ATTQAANTRQ…TIKQAQTDMT (105 aa). The segment covering 69 to 104 has biased composition (basic and acidic residues); sequence RQERTPKLEKAPNTNEEKTSASKIEKISQPKQEEQK. The segment covering 114–141 has biased composition (low complexity); sequence PKQEQSQTTTESTTPKTKVTTPPSTNTP. Positions 142 to 164 are enriched in polar residues; sequence QPMQSTKSDTPQSPTIKQAQTDM. The segment at 228 to 326 is sialyl Lewis X-binding; that stretch reads IDVFIVLEDN…VIKMKNGGKY (99 aa).

This sequence belongs to the staphylococcal/streptococcal toxin family. As to quaternary structure, interacts with host TLR2 (via its extracellular domain).

The protein localises to the secreted. Its function is as follows. Secreted protein that plays an essential role in immune innate response inhibition by interacting with and inhibiting host TLR2. In turn, bacteria recognition by immune cells is impaired and cytokine production is inhibited. Mechanistically, by interacting with TLR2, blocks ligand binding and thus inhibits activation. Second, by interacting with an already formed TLR2-lipopeptide complex, prevents TLR heterodimerization and downstream signaling. The interaction with host TLR2 does not involve sialyl Lewis X interactions. The chain is Staphylococcal superantigen-like 3 from Staphylococcus aureus (strain Newman).